We begin with the raw amino-acid sequence, 431 residues long: Serine--tRNA ligase (431 aa).

Position 237–239 (T237–E239) interacts with L-serine. An ATP-binding site is contributed by R268 to E270. L-serine is bound at residue E291. Position 355–358 (E355–S358) interacts with ATP. Position 390 (S390) interacts with L-serine.

Belongs to the class-II aminoacyl-tRNA synthetase family. Type-1 seryl-tRNA synthetase subfamily. As to quaternary structure, homodimer. The tRNA molecule binds across the dimer.

Its subcellular location is the cytoplasm. It catalyses the reaction tRNA(Ser) + L-serine + ATP = L-seryl-tRNA(Ser) + AMP + diphosphate + H(+). It carries out the reaction tRNA(Sec) + L-serine + ATP = L-seryl-tRNA(Sec) + AMP + diphosphate + H(+). The protein operates within aminoacyl-tRNA biosynthesis; selenocysteinyl-tRNA(Sec) biosynthesis; L-seryl-tRNA(Sec) from L-serine and tRNA(Sec): step 1/1. In terms of biological role, catalyzes the attachment of serine to tRNA(Ser). Is also able to aminoacylate tRNA(Sec) with serine, to form the misacylated tRNA L-seryl-tRNA(Sec), which will be further converted into selenocysteinyl-tRNA(Sec). The protein is Serine--tRNA ligase of Neisseria meningitidis serogroup A / serotype 4A (strain DSM 15465 / Z2491).